We begin with the raw amino-acid sequence, 234 residues long: Glucosamine-6-phosphate deaminase (234 aa).

D63 acts as the Proton acceptor; for enolization step in catalysis. The active-site For ring-opening step is N129. The active-site Proton acceptor; for ring-opening step is H131. E136 functions as the For ring-opening step in the catalytic mechanism.

This sequence belongs to the glucosamine/galactosamine-6-phosphate isomerase family. NagB subfamily.

It catalyses the reaction alpha-D-glucosamine 6-phosphate + H2O = beta-D-fructose 6-phosphate + NH4(+). The protein operates within amino-sugar metabolism; N-acetylneuraminate degradation; D-fructose 6-phosphate from N-acetylneuraminate: step 5/5. Catalyzes the reversible isomerization-deamination of glucosamine 6-phosphate (GlcN6P) to form fructose 6-phosphate (Fru6P) and ammonium ion. In Listeria monocytogenes serovar 1/2a (strain ATCC BAA-679 / EGD-e), this protein is Glucosamine-6-phosphate deaminase.